Reading from the N-terminus, the 360-residue chain is MQIIRHSEQTLKTALISKNPVLVSQYEKLDAGEQRLMNEAFQPASDLFGPITLHSPSDWITSHPEAPQDFEQFFSDPYRKTPSPDKRSVYIQAIGSLGNTRIISEEYIKWLTGYCKAYFYGLRVKLLEPVPVSATRCSFRVNENTQNLQIHAGDILKFLKKKKPEDAFCIVGITMIDLYPRDSWNFVFGQASLTDGVGIFSFARYGSDFYSMRYEGKVKKLKKTSSSDYSIFNNYYIPEITSVLLLRSCKTLTHEIGHIFGLRHCQWLACLMQGSNHLEESDRRPLNLCPICLRKLQCAVGFSIVERYKALVRWIDDESSGTPGATPEHSREGNGNLPKPVEAFKEWKEWIIKCLAVLQK.

Zn(2+) is bound at residue H254. E255 functions as the Proton acceptor in the catalytic mechanism. Positions 258, 264, 265, 270, 289, and 292 each coordinate Zn(2+).

This sequence belongs to the peptidase M54 family. Zn(2+) is required as a cofactor.

Probable zinc metalloprotease. This is Archaemetzincin-2 (AMZ2) from Macaca fascicularis (Crab-eating macaque).